A 362-amino-acid chain; its full sequence is Uracil-DNA glycosylase (362 aa).

Residues 28 to 97 (ASVAPNDPTE…AGPTEDPNFA (70 aa)) form a disordered region. The Proton acceptor role is filled by Asp205.

The protein belongs to the uracil-DNA glycosylase (UDG) superfamily. UNG family.

Its subcellular location is the host nucleus. It carries out the reaction Hydrolyzes single-stranded DNA or mismatched double-stranded DNA and polynucleotides, releasing free uracil.. Its function is as follows. Excises uracil residues from the DNA which can arise as a result of misincorporation of dUMP residues by DNA polymerase or deamination of cytosines. Therefore may reduce deleterious uracil incorporation into the viral genome, particularly in terminally differentiated cells which lack DNA repair enzymes. The chain is Uracil-DNA glycosylase (UL2) from Psittacid herpesvirus 1 (isolate Amazon parrot/-/97-0001/1997) (PsHV-1).